A 331-amino-acid polypeptide reads, in one-letter code: Ornithine carbamoyltransferase (331 aa).

Residues 55–58 (STRT), Gln-82, Arg-106, and 133–136 (HPTQ) each bind carbamoyl phosphate. Residues Asn-166, Asp-230, and 234–235 (SM) contribute to the L-ornithine site. Carbamoyl phosphate contacts are provided by residues 272–273 (CL) and Arg-317.

The protein belongs to the aspartate/ornithine carbamoyltransferase superfamily. OTCase family.

The protein localises to the cytoplasm. The catalysed reaction is carbamoyl phosphate + L-ornithine = L-citrulline + phosphate + H(+). Its pathway is amino-acid biosynthesis; L-arginine biosynthesis; L-arginine from L-ornithine and carbamoyl phosphate: step 1/3. In terms of biological role, reversibly catalyzes the transfer of the carbamoyl group from carbamoyl phosphate (CP) to the N(epsilon) atom of ornithine (ORN) to produce L-citrulline. This chain is Ornithine carbamoyltransferase, found in Neisseria gonorrhoeae (strain ATCC 700825 / FA 1090).